Here is a 359-residue protein sequence, read N- to C-terminus: MSDYYEILGVPKDADSDEIKKAFRKLALKYHPDRNAGDKEAEEKFKEINEAYQVLGNDERRQTYDRYGKEGLNGAFGNDFGGFDFGDIFDTFFGGGGFNKSRSQRYDDAYDLDSEILVSISFKDAFFGVSKDIKYKIKKPCKTCDGTGSKDKKLNTCPYCGGSGKIVKRSGFLSFAQTCPFCKGSGQIVKEKCHDCAGKGFIEEQVNVKFDIPKGVNTGIRIRIAKKGNISKSGEIGDLYVAVQVKDDKFFVRSADDIYIEVPVFFTQAILGKTIKVPTMHGEKELQLKVGSKDKDQFVIEKEGFENIRTKIAGNLIVQINVQTPKKLTDEQIELLEKLHESFDKTADGIFDKIKNWFK.

The J domain maps to 3-68 (DYYEILGVPK…ERRQTYDRYG (66 aa)). Residues 128–205 (GVSKDIKYKI…CAGKGFIEEQ (78 aa)) form a CR-type zinc finger. Zn(2+)-binding residues include cysteine 141, cysteine 144, cysteine 157, cysteine 160, cysteine 179, cysteine 182, cysteine 193, and cysteine 196. CXXCXGXG motif repeat units follow at residues 141–148 (CKTCDGTG), 157–164 (CPYCGGSG), 179–186 (CPFCKGSG), and 193–200 (CHDCAGKG).

It belongs to the DnaJ family. In terms of assembly, homodimer. It depends on Zn(2+) as a cofactor.

It is found in the cytoplasm. In terms of biological role, participates actively in the response to hyperosmotic and heat shock by preventing the aggregation of stress-denatured proteins and by disaggregating proteins, also in an autonomous, DnaK-independent fashion. Unfolded proteins bind initially to DnaJ; upon interaction with the DnaJ-bound protein, DnaK hydrolyzes its bound ATP, resulting in the formation of a stable complex. GrpE releases ADP from DnaK; ATP binding to DnaK triggers the release of the substrate protein, thus completing the reaction cycle. Several rounds of ATP-dependent interactions between DnaJ, DnaK and GrpE are required for fully efficient folding. Also involved, together with DnaK and GrpE, in the DNA replication of plasmids through activation of initiation proteins. The protein is Chaperone protein DnaJ of Campylobacter hominis (strain ATCC BAA-381 / DSM 21671 / CCUG 45161 / LMG 19568 / NCTC 13146 / CH001A).